The chain runs to 352 residues: Probable dual-specificity RNA methyltransferase RlmN (352 aa).

Residue glutamate 92 is the Proton acceptor of the active site. Positions 98–328 (YKHGFTACIS…ATIRREMGTD (231 aa)) constitute a Radical SAM core domain. An intrachain disulfide couples cysteine 105 to cysteine 333. Residues cysteine 112, cysteine 116, and cysteine 119 each coordinate [4Fe-4S] cluster. S-adenosyl-L-methionine-binding positions include 159–160 (GE), serine 191, 214–216 (SLH), and asparagine 290. Catalysis depends on cysteine 333, which acts as the S-methylcysteine intermediate.

It belongs to the radical SAM superfamily. RlmN family. The cofactor is [4Fe-4S] cluster.

Its subcellular location is the cytoplasm. It catalyses the reaction adenosine(2503) in 23S rRNA + 2 reduced [2Fe-2S]-[ferredoxin] + 2 S-adenosyl-L-methionine = 2-methyladenosine(2503) in 23S rRNA + 5'-deoxyadenosine + L-methionine + 2 oxidized [2Fe-2S]-[ferredoxin] + S-adenosyl-L-homocysteine. The enzyme catalyses adenosine(37) in tRNA + 2 reduced [2Fe-2S]-[ferredoxin] + 2 S-adenosyl-L-methionine = 2-methyladenosine(37) in tRNA + 5'-deoxyadenosine + L-methionine + 2 oxidized [2Fe-2S]-[ferredoxin] + S-adenosyl-L-homocysteine. Specifically methylates position 2 of adenine 2503 in 23S rRNA and position 2 of adenine 37 in tRNAs. This chain is Probable dual-specificity RNA methyltransferase RlmN, found in Alkaliphilus metalliredigens (strain QYMF).